The primary structure comprises 206 residues: Pyridoxine/pyridoxamine 5'-phosphate oxidase (206 aa).

FMN is bound by residues 53–58 (RMVLLK), 68–69 (YT), lysine 75, and glutamine 97. Lysine 58 provides a ligand contact to substrate. Residues tyrosine 115, arginine 119, and serine 123 each coordinate substrate. Residues 132 to 133 (QS) and tryptophan 177 each bind FMN. 183-185 (RLH) provides a ligand contact to substrate. Arginine 187 is a binding site for FMN.

Belongs to the pyridoxamine 5'-phosphate oxidase family. Homodimer. Requires FMN as cofactor.

It catalyses the reaction pyridoxamine 5'-phosphate + O2 + H2O = pyridoxal 5'-phosphate + H2O2 + NH4(+). The catalysed reaction is pyridoxine 5'-phosphate + O2 = pyridoxal 5'-phosphate + H2O2. It functions in the pathway cofactor metabolism; pyridoxal 5'-phosphate salvage; pyridoxal 5'-phosphate from pyridoxamine 5'-phosphate: step 1/1. Its pathway is cofactor metabolism; pyridoxal 5'-phosphate salvage; pyridoxal 5'-phosphate from pyridoxine 5'-phosphate: step 1/1. Functionally, catalyzes the oxidation of either pyridoxine 5'-phosphate (PNP) or pyridoxamine 5'-phosphate (PMP) into pyridoxal 5'-phosphate (PLP). The polypeptide is Pyridoxine/pyridoxamine 5'-phosphate oxidase (Rhizobium johnstonii (strain DSM 114642 / LMG 32736 / 3841) (Rhizobium leguminosarum bv. viciae)).